Consider the following 274-residue polypeptide: Urease accessory protein UreD (274 aa).

It belongs to the UreD family. As to quaternary structure, ureD, UreF and UreG form a complex that acts as a GTP-hydrolysis-dependent molecular chaperone, activating the urease apoprotein by helping to assemble the nickel containing metallocenter of UreC. The UreE protein probably delivers the nickel.

It localises to the cytoplasm. In terms of biological role, required for maturation of urease via the functional incorporation of the urease nickel metallocenter. The polypeptide is Urease accessory protein UreD (Thermosynechococcus vestitus (strain NIES-2133 / IAM M-273 / BP-1)).